A 407-amino-acid chain; its full sequence is Methylthioribose kinase (407 aa).

Residues asparagine 40, lysine 57, and 111–113 (EDL) contribute to the ATP site. Position 229 (aspartate 229) interacts with substrate. Position 246–248 (246–248 (DAE)) interacts with ATP. Arginine 344 provides a ligand contact to substrate.

Belongs to the methylthioribose kinase family. Homodimer.

The catalysed reaction is 5-(methylsulfanyl)-D-ribose + ATP = 5-(methylsulfanyl)-alpha-D-ribose 1-phosphate + ADP + H(+). It participates in amino-acid biosynthesis; L-methionine biosynthesis via salvage pathway; S-methyl-5-thio-alpha-D-ribose 1-phosphate from S-methyl-5'-thioadenosine (hydrolase route): step 2/2. Its function is as follows. Catalyzes the phosphorylation of methylthioribose into methylthioribose-1-phosphate. This is Methylthioribose kinase from Yersinia pestis bv. Antiqua (strain Angola).